The chain runs to 383 residues: N-acetyldiaminopimelate deacetylase (383 aa).

Asp75 is an active-site residue. Catalysis depends on Glu134, which acts as the Proton acceptor.

The protein belongs to the peptidase M20A family. N-acetyldiaminopimelate deacetylase subfamily.

The enzyme catalyses N-acetyl-(2S,6S)-2,6-diaminopimelate + H2O = (2S,6S)-2,6-diaminopimelate + acetate. The protein operates within amino-acid biosynthesis; L-lysine biosynthesis via DAP pathway; LL-2,6-diaminopimelate from (S)-tetrahydrodipicolinate (acetylase route): step 3/3. Catalyzes the conversion of N-acetyl-diaminopimelate to diaminopimelate and acetate. This Lactobacillus acidophilus (strain ATCC 700396 / NCK56 / N2 / NCFM) protein is N-acetyldiaminopimelate deacetylase.